The following is a 125-amino-acid chain: UPF0763 protein NAMH_0545 (125 aa).

The protein belongs to the UPF0763 family.

This Nautilia profundicola (strain ATCC BAA-1463 / DSM 18972 / AmH) protein is UPF0763 protein NAMH_0545.